The chain runs to 195 residues: Holliday junction branch migration complex subunit RuvA (195 aa).

The interval 1–64 is domain I; that stretch reads MIASIRGIIQ…EDALTLYGFS (64 aa). A domain II region spans residues 65–142; that stretch reads DPAQRNLFEQ…DLRQLSGTTP (78 aa). Residues 143 to 151 are flexible linker; the sequence is GNVSTLDRE. A domain III region spans residues 151–195; sequence ELTDILISLGYSATEAAAAIAALPGDAPPTLEERLRLALRYFGSA.

Belongs to the RuvA family. As to quaternary structure, homotetramer. Forms an RuvA(8)-RuvB(12)-Holliday junction (HJ) complex. HJ DNA is sandwiched between 2 RuvA tetramers; dsDNA enters through RuvA and exits via RuvB. An RuvB hexamer assembles on each DNA strand where it exits the tetramer. Each RuvB hexamer is contacted by two RuvA subunits (via domain III) on 2 adjacent RuvB subunits; this complex drives branch migration. In the full resolvosome a probable DNA-RuvA(4)-RuvB(12)-RuvC(2) complex forms which resolves the HJ.

It localises to the cytoplasm. The RuvA-RuvB-RuvC complex processes Holliday junction (HJ) DNA during genetic recombination and DNA repair, while the RuvA-RuvB complex plays an important role in the rescue of blocked DNA replication forks via replication fork reversal (RFR). RuvA specifically binds to HJ cruciform DNA, conferring on it an open structure. The RuvB hexamer acts as an ATP-dependent pump, pulling dsDNA into and through the RuvAB complex. HJ branch migration allows RuvC to scan DNA until it finds its consensus sequence, where it cleaves and resolves the cruciform DNA. The protein is Holliday junction branch migration complex subunit RuvA of Chloroflexus aurantiacus (strain ATCC 29364 / DSM 637 / Y-400-fl).